A 156-amino-acid polypeptide reads, in one-letter code: Phosphopantetheine adenylyltransferase (156 aa).

T9 serves as a coordination point for substrate. ATP is bound by residues 9–10 and H17; that span reads TF. Substrate contacts are provided by K41, L73, and R87. ATP contacts are provided by residues 88–90, E98, and 123–129; these read GVR and WAFVSST.

It belongs to the bacterial CoaD family. In terms of assembly, homohexamer. Mg(2+) serves as cofactor.

It localises to the cytoplasm. The catalysed reaction is (R)-4'-phosphopantetheine + ATP + H(+) = 3'-dephospho-CoA + diphosphate. It participates in cofactor biosynthesis; coenzyme A biosynthesis; CoA from (R)-pantothenate: step 4/5. Its function is as follows. Reversibly transfers an adenylyl group from ATP to 4'-phosphopantetheine, yielding dephospho-CoA (dPCoA) and pyrophosphate. This chain is Phosphopantetheine adenylyltransferase, found in Haemophilus influenzae (strain ATCC 51907 / DSM 11121 / KW20 / Rd).